The chain runs to 243 residues: Peptidyl-tRNA hydrolase (243 aa).

Residue tyrosine 14 participates in tRNA binding. The active-site Proton acceptor is histidine 19. TRNA contacts are provided by phenylalanine 64, asparagine 66, and asparagine 112. Positions 188–243 (GGKAEEEKPRKDNKTTEKKPAGQSHIHQARNHNQPKVLTTGPMADILKKMFGNKGE) are disordered. The segment covering 190–207 (KAEEEKPRKDNKTTEKKP) has biased composition (basic and acidic residues).

It belongs to the PTH family. In terms of assembly, monomer.

It is found in the cytoplasm. The enzyme catalyses an N-acyl-L-alpha-aminoacyl-tRNA + H2O = an N-acyl-L-amino acid + a tRNA + H(+). Hydrolyzes ribosome-free peptidyl-tRNAs (with 1 or more amino acids incorporated), which drop off the ribosome during protein synthesis, or as a result of ribosome stalling. In terms of biological role, catalyzes the release of premature peptidyl moieties from peptidyl-tRNA molecules trapped in stalled 50S ribosomal subunits, and thus maintains levels of free tRNAs and 50S ribosomes. In Rhizobium leguminosarum bv. trifolii (strain WSM2304), this protein is Peptidyl-tRNA hydrolase.